A 279-amino-acid polypeptide reads, in one-letter code: Pleckstrin homology domain-containing family F member 1 (279 aa).

Residues 35–131 (VLLGEGVLTK…WISHIEECVR (97 aa)) form the PH domain. The FYVE-type zinc finger occupies 152 to 212 (DKATDICMRC…VCSLCYRELA (61 aa)). Zn(2+) contacts are provided by Cys-158, Cys-161, Cys-175, Cys-178, Cys-183, Cys-186, Cys-204, and Cys-207. Residues 219 to 264 (EAKERFRGSPGQLTHLGSTMCGASSGDDDDSDEDREGSGDGDWPTQ) are disordered. The segment covering 244–253 (GDDDDSDEDR) has biased composition (acidic residues).

The protein resides in the nucleus. Its subcellular location is the cytoplasm. It is found in the perinuclear region. It localises to the lysosome. Functionally, may induce apoptosis through the lysosomal-mitochondrial pathway. Translocates to the lysosome initiating the permeabilization of lysosomal membrane (LMP) and resulting in the release of CTSD and CTSL to the cytoplasm. Triggers the caspase-independent apoptosis by altering mitochondrial membrane permeabilization (MMP) resulting in the release of PDCD8. This Rattus norvegicus (Rat) protein is Pleckstrin homology domain-containing family F member 1 (Plekhf1).